The primary structure comprises 770 residues: Rho guanine nucleotide exchange factor 38 (770 aa).

The disordered stretch occupies residues 33–88 (KTDTVVDSSVSGDHSGSLRRSQSDRTEYNQKLQEKMTPQAECSSAETPTPEDEQQV). Position 34 is a phosphothreonine (T34). Residues 37 to 47 (VVDSSVSGDHS) show a composition bias toward low complexity. Basic and acidic residues predominate over residues 53–66 (SQSDRTEYNQKLQE). The DH domain maps to 94–285 (KRAKIIRELI…KDINVNINEL (192 aa)). In terms of domain architecture, BAR spans 327 to 542 (LKILTRGESQ…VHSLTFVKEN (216 aa)). SH3 domains lie at 581-644 (GAEE…PHNP) and 706-769 (VDEQ…KMTY).

Its function is as follows. May act as a guanine-nucleotide releasing factor. This is Rho guanine nucleotide exchange factor 38 (Arhgef38) from Mus musculus (Mouse).